Reading from the N-terminus, the 60-residue chain is Beta-toxin BotIT2 (60 aa).

An LCN-type CS-alpha/beta domain is found at 1 to 60 (DGYIKGYKGCKITCVINDDYCDTECKAEGGTYGYCWKWGLACWCEDLPDEKRWKSETNTC). Disulfide bonds link C10-C60, C14-C35, C21-C42, and C25-C44.

The protein belongs to the long (4 C-C) scorpion toxin superfamily. Sodium channel inhibitor family. Beta subfamily. In terms of tissue distribution, expressed by the venom gland.

Its subcellular location is the secreted. Its function is as follows. Beta toxins bind voltage-independently at site-4 of sodium channels (Nav) and shift the voltage of activation toward more negative potentials thereby affecting sodium channel activation and promoting spontaneous and repetitive firing. This toxin specifically acts by inducing a new current with very slow activation/deactivation kinetics due to the transformation of normal fast channels into slow ones. It possess properties of excitatory and depressant toxins. It is highly active on insects and less active on mammals. In Buthus occitanus tunetanus (Common European scorpion), this protein is Beta-toxin BotIT2.